The following is a 393-amino-acid chain: Riboflavin biosynthesis protein RibBA (393 aa).

Positions 1-200 are DHBP synthase; the sequence is MQFDNIDSAL…IDDLIEYRKK (200 aa). D-ribulose 5-phosphate-binding positions include 27-28, D32, 139-143, and E163; these read RE and RNGHT. E28 contributes to the Mg(2+) binding site. Mg(2+) is bound at residue H142. The GTP cyclohydrolase II stretch occupies residues 201-393; sequence LEPEIEFKAK…TKKIKMGHLI (193 aa). 249–253 serves as a coordination point for GTP; that stretch reads RLHSA. The Zn(2+) site is built by C254, C265, and C267. GTP is bound by residues Q270, 291–293, and T313; that span reads EGR. D325 serves as the catalytic Proton acceptor; for GTP cyclohydrolase activity. Residue R327 is the Nucleophile; for GTP cyclohydrolase activity of the active site. The GTP site is built by S348 and K353.

It in the N-terminal section; belongs to the DHBP synthase family. The protein in the C-terminal section; belongs to the GTP cyclohydrolase II family. It depends on Mg(2+) as a cofactor. Mn(2+) serves as cofactor. The cofactor is Zn(2+).

The enzyme catalyses D-ribulose 5-phosphate = (2S)-2-hydroxy-3-oxobutyl phosphate + formate + H(+). It catalyses the reaction GTP + 4 H2O = 2,5-diamino-6-hydroxy-4-(5-phosphoribosylamino)-pyrimidine + formate + 2 phosphate + 3 H(+). The protein operates within cofactor biosynthesis; riboflavin biosynthesis; 2-hydroxy-3-oxobutyl phosphate from D-ribulose 5-phosphate: step 1/1. Its pathway is cofactor biosynthesis; riboflavin biosynthesis; 5-amino-6-(D-ribitylamino)uracil from GTP: step 1/4. Its function is as follows. Catalyzes the conversion of D-ribulose 5-phosphate to formate and 3,4-dihydroxy-2-butanone 4-phosphate. In terms of biological role, catalyzes the conversion of GTP to 2,5-diamino-6-ribosylamino-4(3H)-pyrimidinone 5'-phosphate (DARP), formate and pyrophosphate. This Staphylococcus aureus (strain MSSA476) protein is Riboflavin biosynthesis protein RibBA.